The primary structure comprises 49 residues: Small, acid-soluble spore protein O (49 aa).

A disordered region spans residues 1 to 49 (MGKRKANHTISGMNAASAQGQGAGYNEEFANENLTAAERQNNKKRKKNQ). A compositionally biased stretch (polar residues) spans 8–20 (HTISGMNAASAQG).

The protein belongs to the SspO family.

The protein resides in the spore core. The sequence is that of Small, acid-soluble spore protein O from Bacillus cereus (strain AH187).